Consider the following 255-residue polypeptide: BTB/POZ domain-containing protein KCTD14 (255 aa).

The segment at 1–29 (MWQGCAVERPVGRMTSQTPLPQSPRPRRP) is disordered. The 98-residue stretch at 33–130 (TVVELNVGGE…LLEDMPQIFG (98 aa)) folds into the BTB domain.

This Homo sapiens (Human) protein is BTB/POZ domain-containing protein KCTD14 (KCTD14).